The sequence spans 415 residues: Gamma-glutamyl phosphate reductase (415 aa).

The protein belongs to the gamma-glutamyl phosphate reductase family.

It localises to the cytoplasm. It carries out the reaction L-glutamate 5-semialdehyde + phosphate + NADP(+) = L-glutamyl 5-phosphate + NADPH + H(+). It functions in the pathway amino-acid biosynthesis; L-proline biosynthesis; L-glutamate 5-semialdehyde from L-glutamate: step 2/2. In terms of biological role, catalyzes the NADPH-dependent reduction of L-glutamate 5-phosphate into L-glutamate 5-semialdehyde and phosphate. The product spontaneously undergoes cyclization to form 1-pyrroline-5-carboxylate. The polypeptide is Gamma-glutamyl phosphate reductase (Listeria monocytogenes serotype 4b (strain F2365)).